Reading from the N-terminus, the 371-residue chain is Peptide chain release factor 2 (371 aa).

Q251 bears the N5-methylglutamine mark.

Belongs to the prokaryotic/mitochondrial release factor family. Post-translationally, methylated by PrmC. Methylation increases the termination efficiency of RF2.

The protein resides in the cytoplasm. Its function is as follows. Peptide chain release factor 2 directs the termination of translation in response to the peptide chain termination codons UGA and UAA. The sequence is that of Peptide chain release factor 2 from Arthrobacter sp. (strain FB24).